The chain runs to 443 residues: MEGYWAVLFPVLKVWFSCVIVLIMLPAMFGISLGITETYMKLLIKTLEWATHRIQRASRAEEILKESASNGLIQRDNSSLEQEIEELRRNRPKSADRGDFTLSDVLYFSRKGFESIVEDDVTQRFTSEELVSWNLLTRTNNNFQYISLRLTVLWVVGVVVRYCILLPLRITLTTIGLTWLVIGTTTVGFLPNCRVKNWLSELVHLMCYRICARGLSATIHFHNKQNRPKKGGICVANHTSPIDVVILANDGCYAMVGQVHGGLMGVLQRAMERSCPHIWFERSEMRDRHLVTQRLKDHVNAKTKLPILIFPEGTCINNTSVMMFKKGSFEIGGTIYPVAIKYDPQFGDAFWNSSKYSIMSYLLRMMTSWAIVCNVWYLPPMTHEEGEDAVQFANRVKSTIAQQGGLVDLAWDGGLKRAKVKDSFKEQQQKKYSHMVVGEDSSD.

The next 3 helical transmembrane spans lie at 15–35 (WFSC…SLGI), 146–166 (ISLR…CILL), and 170–190 (ITLT…VGFL). Residues 238-243 (HTSPID) carry the HXXXXD motif motif. The helical transmembrane segment at 358–378 (IMSYLLRMMTSWAIVCNVWYL) threads the bilayer.

It belongs to the 1-acyl-sn-glycerol-3-phosphate acyltransferase family.

Its subcellular location is the endoplasmic reticulum membrane. It carries out the reaction sn-glycerol 3-phosphate + an acyl-CoA = a 1-acyl-sn-glycero-3-phosphate + CoA. The enzyme catalyses a 1-acyl-sn-glycero-3-phosphate + an acyl-CoA = a 1,2-diacyl-sn-glycero-3-phosphate + CoA. It functions in the pathway glycerolipid metabolism; triacylglycerol biosynthesis. The protein operates within phospholipid metabolism; CDP-diacylglycerol biosynthesis; CDP-diacylglycerol from sn-glycerol 3-phosphate: step 1/3. In terms of biological role, may transfer the acyl-group from acyl-coA to the sn-1 position of glycerol-3-phosphate, an essential step in glycerolipid biosynthesis. Also transfers the acyl-group from acyl-coA to the sn-2 position of 1-acyl-sn-glycerol-3-phosphate (lysophosphatidic acid, or LPA), forming 1,2-diacyl-sn-glycerol-3-phosphate (phosphatidic acid, or PA). The sequence is that of Glycerol-3-phosphate acyltransferase 3-like (agpat9l) from Danio rerio (Zebrafish).